Consider the following 239-residue polypeptide: Biosynthetic peptidoglycan transglycosylase (239 aa).

Residues 29–49 (GMFGLGALMLVWIVAYAVVPV) form a helical membrane-spanning segment.

The protein belongs to the glycosyltransferase 51 family.

It localises to the cell inner membrane. It carries out the reaction [GlcNAc-(1-&gt;4)-Mur2Ac(oyl-L-Ala-gamma-D-Glu-L-Lys-D-Ala-D-Ala)](n)-di-trans,octa-cis-undecaprenyl diphosphate + beta-D-GlcNAc-(1-&gt;4)-Mur2Ac(oyl-L-Ala-gamma-D-Glu-L-Lys-D-Ala-D-Ala)-di-trans,octa-cis-undecaprenyl diphosphate = [GlcNAc-(1-&gt;4)-Mur2Ac(oyl-L-Ala-gamma-D-Glu-L-Lys-D-Ala-D-Ala)](n+1)-di-trans,octa-cis-undecaprenyl diphosphate + di-trans,octa-cis-undecaprenyl diphosphate + H(+). It participates in cell wall biogenesis; peptidoglycan biosynthesis. Peptidoglycan polymerase that catalyzes glycan chain elongation from lipid-linked precursors. The polypeptide is Biosynthetic peptidoglycan transglycosylase (Jannaschia sp. (strain CCS1)).